The chain runs to 504 residues: Maturase K (504 aa).

The protein belongs to the intron maturase 2 family. MatK subfamily.

The protein resides in the plastid. The protein localises to the chloroplast. In terms of biological role, usually encoded in the trnK tRNA gene intron. Probably assists in splicing its own and other chloroplast group II introns. The polypeptide is Maturase K (Rorippa amphibia (Great yellow-cress)).